We begin with the raw amino-acid sequence, 288 residues long: S-methyl-5'-thioadenosine phosphorylase (288 aa).

Residues Ser10, Arg52–His53, and Thr85–Ala86 contribute to the phosphate site. Substrate is bound at residue Met188. Thr189 contacts phosphate. Residue Asp212–Asp214 coordinates substrate.

This sequence belongs to the PNP/MTAP phosphorylase family. MTAP subfamily. As to quaternary structure, homotrimer.

The protein resides in the cytoplasm. The protein localises to the nucleus. It catalyses the reaction S-methyl-5'-thioadenosine + phosphate = 5-(methylsulfanyl)-alpha-D-ribose 1-phosphate + adenine. It functions in the pathway amino-acid biosynthesis; L-methionine biosynthesis via salvage pathway; S-methyl-5-thio-alpha-D-ribose 1-phosphate from S-methyl-5'-thioadenosine (phosphorylase route): step 1/1. Functionally, catalyzes the reversible phosphorylation of S-methyl-5'-thioadenosine (MTA) to adenine and 5-methylthioribose-1-phosphate. Involved in the breakdown of MTA, a major by-product of polyamine biosynthesis. Responsible for the first step in the methionine salvage pathway after MTA has been generated from S-adenosylmethionine. Has broad substrate specificity with 6-aminopurine nucleosides as preferred substrates. The sequence is that of S-methyl-5'-thioadenosine phosphorylase from Caenorhabditis elegans.